The sequence spans 287 residues: Leucine-rich repeat-containing protein 72 (287 aa).

4 LRR repeats span residues 46–67, 68–89, 90–111, and 112–133; these read DVFELFLSKKELTEVIDLSRFK, KLKYLWLHHNKLHGITFLTRNY, CLTELYLNNNAIFEIEGLHYLP, and SLHILLLHHNELTNIDATVKEL. The LRRCT domain occupies 147–185; sequence NPLCQYNLYRLYIIYHLPGVELLDRNQVTEKERRSMITI.

The protein is Leucine-rich repeat-containing protein 72 (LRRC72) of Homo sapiens (Human).